The chain runs to 495 residues: RuBisCO large subunit-binding protein subunit alpha (495 aa).

This sequence belongs to the chaperonin (HSP60) family. As to quaternary structure, oligomer of probably six alpha and six beta subunits.

The protein localises to the plastid. The protein resides in the chloroplast. Its function is as follows. This protein binds RuBisCO small and large subunits and is implicated in the assembly of the enzyme oligomer. This chain is RuBisCO large subunit-binding protein subunit alpha, found in Ricinus communis (Castor bean).